The sequence spans 230 residues: Cell division ATP-binding protein FtsE (230 aa).

The ABC transporter domain occupies 3–228; sequence ITLDHVTKQY…RDEQRGVYGM (226 aa). 37-44 lines the ATP pocket; that stretch reads GPSGSGKS.

Belongs to the ABC transporter superfamily. As to quaternary structure, homodimer. Forms a membrane-associated complex with FtsX.

Its subcellular location is the cell membrane. Part of the ABC transporter FtsEX involved in cellular division. Has ATPase activity. This chain is Cell division ATP-binding protein FtsE, found in Mycobacterium tuberculosis (strain ATCC 25618 / H37Rv).